A 531-amino-acid polypeptide reads, in one-letter code: Dihydropyrimidinase (531 aa).

The Zn(2+) site is built by His-103, His-105, and Lys-193. Lys-193 is subject to N6-carboxylysine. Tyr-198 contacts substrate. Residues His-226 and His-282 each contribute to the Zn(2+) site. Ser-332 contributes to the substrate binding site. Position 359 (Asp-359) interacts with Zn(2+). Substrate is bound at residue Asn-380.

Belongs to the metallo-dependent hydrolases superfamily. Hydantoinase/dihydropyrimidinase family. As to quaternary structure, homotetramer. It depends on Zn(2+) as a cofactor. Carboxylation allows a single lysine to coordinate two zinc ions.

Its subcellular location is the endoplasmic reticulum. The enzyme catalyses 5,6-dihydrouracil + H2O = 3-(carbamoylamino)propanoate + H(+). It participates in amino-acid biosynthesis; beta-alanine biosynthesis. Catalyzes the second step of the reductive pyrimidine degradation, the reversible hydrolytic ring opening of dihydropyrimidines. Can catalyze the ring opening of 5,6-dihydrouracil to N-carbamoyl-alanine and of 5,6-dihydrothymine to N-carbamoyl-amino isobutyrate. Involved in the recycling of nitrogen from nucleobases to general nitrogen metabolism. The polypeptide is Dihydropyrimidinase (Arabidopsis thaliana (Mouse-ear cress)).